A 238-amino-acid polypeptide reads, in one-letter code: 2,3-bisphosphoglycerate-dependent phosphoglycerate mutase (238 aa).

Residues 8–15, 21–22, R60, 86–89, K97, 113–114, and 182–183 each bind substrate; these read RHGQSEWN, TG, ERHY, RR, and GN. H9 functions as the Tele-phosphohistidine intermediate in the catalytic mechanism. E86 (proton donor/acceptor) is an active-site residue.

This sequence belongs to the phosphoglycerate mutase family. BPG-dependent PGAM subfamily. In terms of assembly, homodimer.

It carries out the reaction (2R)-2-phosphoglycerate = (2R)-3-phosphoglycerate. It functions in the pathway carbohydrate degradation; glycolysis; pyruvate from D-glyceraldehyde 3-phosphate: step 3/5. Its function is as follows. Catalyzes the interconversion of 2-phosphoglycerate and 3-phosphoglycerate. The polypeptide is 2,3-bisphosphoglycerate-dependent phosphoglycerate mutase (Pelagibacter ubique (strain HTCC1062)).